The sequence spans 430 residues: Glutamate-1-semialdehyde 2,1-aminomutase (430 aa).

K265 carries the post-translational modification N6-(pyridoxal phosphate)lysine.

Belongs to the class-III pyridoxal-phosphate-dependent aminotransferase family. HemL subfamily. The cofactor is pyridoxal 5'-phosphate.

It is found in the cytoplasm. It catalyses the reaction (S)-4-amino-5-oxopentanoate = 5-aminolevulinate. It participates in porphyrin-containing compound metabolism; protoporphyrin-IX biosynthesis; 5-aminolevulinate from L-glutamyl-tRNA(Glu): step 2/2. This Caldivirga maquilingensis (strain ATCC 700844 / DSM 13496 / JCM 10307 / IC-167) protein is Glutamate-1-semialdehyde 2,1-aminomutase.